The sequence spans 736 residues: Elongation factor 2 (736 aa).

The tr-type G domain maps to 19–262; the sequence is DQIRNIGIIA…MVIKFVPNPR (244 aa). GTP is bound by residues 28 to 35, 94 to 98, and 148 to 151; these read AHVDHGKT, DTPGH, and NKVD. Diphthamide is present on His-602.

Belongs to the TRAFAC class translation factor GTPase superfamily. Classic translation factor GTPase family. EF-G/EF-2 subfamily.

The protein localises to the cytoplasm. In terms of biological role, catalyzes the GTP-dependent ribosomal translocation step during translation elongation. During this step, the ribosome changes from the pre-translocational (PRE) to the post-translocational (POST) state as the newly formed A-site-bound peptidyl-tRNA and P-site-bound deacylated tRNA move to the P and E sites, respectively. Catalyzes the coordinated movement of the two tRNA molecules, the mRNA and conformational changes in the ribosome. This Aeropyrum pernix (strain ATCC 700893 / DSM 11879 / JCM 9820 / NBRC 100138 / K1) protein is Elongation factor 2 (fusA).